The chain runs to 414 residues: MTSETDINKSASPTAAAKEQPEEPDGPLPGSASEQEKKVRFSPAIMSTKNSTDLVEYVDKGHSFLPAIPNTQRSQLEDRLNNQDRTIAFLLEQAFRIKEDISACLQGTHGFRKEESLARKLLENHIQTITSIVKKLSQNIEMIEEQIKARDLVATGTNFAVQDLSNKHLQGVGDLRGRVARCDSSIMKLSGDIHFIRNEHQQLEKTIQEMISSLQTVSKNLDTKVMQLLEKIEASSSEQISNLKMVQGDYRHEMNLLEFKFNSLSLNLYEEMENHQKRTENQLIKYEQEQLSRANQCLALLQEKLDMSEKNMEEKLLKLSSKLENFINTEKYEADLNKIKHTENKLSKKMSQLEKQIWDELEKMQDEYQSGFKSIHDSLNSLQRIQKTKMDLENYKVQKDLKKLQRKIAELQES.

Residues 1–13 (MTSETDINKSASP) are compositionally biased toward polar residues. The tract at residues 1 to 43 (MTSETDINKSASPTAAAKEQPEEPDGPLPGSASEQEKKVRFSP) is disordered. Coiled coils occupy residues 70–94 (NTQR…LEQA), 121–149 (LLEN…QIKA), 188–223 (KLSG…NLDT), and 266–414 (LNLY…LQES).

This sequence belongs to the FAM81 family.

This chain is Protein FAM81B (FAM81B), found in Bos taurus (Bovine).